The sequence spans 210 residues: Putative fructokinase-8 (210 aa).

Belongs to the carbohydrate kinase PfkB family.

It carries out the reaction D-fructose + ATP = D-fructose 6-phosphate + ADP + H(+). The protein operates within glycan biosynthesis; starch biosynthesis. In terms of biological role, may play an important role in maintaining the flux of carbon towards starch formation. The chain is Putative fructokinase-8 from Arabidopsis thaliana (Mouse-ear cress).